Here is a 648-residue protein sequence, read N- to C-terminus: DNA ligase (648 aa).

NAD(+) contacts are provided by residues 30-34 (DEEYD), 79-80 (SM), and Glu108. Residue Lys110 is the N6-AMP-lysine intermediate of the active site. Residues Arg131, Glu165, Lys280, and Lys304 each coordinate NAD(+). Positions 398, 401, 414, and 419 each coordinate Zn(2+). Residues 573–648 (AKENPFKGKI…LTEDEMRAML (76 aa)) enclose the BRCT domain.

The protein belongs to the NAD-dependent DNA ligase family. LigA subfamily. Mg(2+) is required as a cofactor. Mn(2+) serves as cofactor.

It carries out the reaction NAD(+) + (deoxyribonucleotide)n-3'-hydroxyl + 5'-phospho-(deoxyribonucleotide)m = (deoxyribonucleotide)n+m + AMP + beta-nicotinamide D-nucleotide.. Functionally, DNA ligase that catalyzes the formation of phosphodiester linkages between 5'-phosphoryl and 3'-hydroxyl groups in double-stranded DNA using NAD as a coenzyme and as the energy source for the reaction. It is essential for DNA replication and repair of damaged DNA. In Sulfurovum sp. (strain NBC37-1), this protein is DNA ligase.